A 66-amino-acid chain; its full sequence is Large ribosomal subunit protein uL29 (66 aa).

This sequence belongs to the universal ribosomal protein uL29 family.

The sequence is that of Large ribosomal subunit protein uL29 from Sinorhizobium fredii (strain NBRC 101917 / NGR234).